We begin with the raw amino-acid sequence, 1964 residues long: Neurogenic locus notch homolog protein 4 (1964 aa).

An N-terminal signal peptide occupies residues 1–20 (MQPQLLLLLLLPLNFPVILT). 4 consecutive EGF-like domains span residues 21–60 (RELLCGGSPEPCANGGTCLRLSRGQGICQCAPGFLGETCQ), 61–112 (FPDP…DRCQ), 115–152 (LEELCPPSFCSNGGHCYVQASGRPQCSCEPGWTGEQCQ), and 153–189 (LRDFCSANPCANGGVCLATYPQIQCRCPPGFEGHTCE). Over 21-1443 (RELLCGGSPE…TRPSANQLPW (1423 aa)) the chain is Extracellular. 95 disulfide bridges follow: cysteine 25–cysteine 38, cysteine 32–cysteine 48, cysteine 50–cysteine 59, cysteine 65–cysteine 77, cysteine 71–cysteine 100, cysteine 102–cysteine 111, cysteine 119–cysteine 130, cysteine 124–cysteine 140, cysteine 142–cysteine 151, cysteine 157–cysteine 168, cysteine 162–cysteine 177, cysteine 179–cysteine 188, cysteine 195–cysteine 208, cysteine 202–cysteine 217, cysteine 219–cysteine 228, cysteine 235–cysteine 246, cysteine 240–cysteine 259, cysteine 261–cysteine 270, cysteine 277–cysteine 288, cysteine 282–cysteine 297, cysteine 299–cysteine 308, cysteine 315–cysteine 329, cysteine 323–cysteine 338, cysteine 340–cysteine 349, cysteine 356–cysteine 367, cysteine 361–cysteine 376, cysteine 378–cysteine 387, cysteine 393–cysteine 404, cysteine 398–cysteine 415, cysteine 417–cysteine 426, cysteine 433–cysteine 449, cysteine 443–cysteine 458, cysteine 460–cysteine 469, cysteine 476–cysteine 487, cysteine 481–cysteine 496, cysteine 498–cysteine 507, cysteine 514–cysteine 525, cysteine 519–cysteine 534, cysteine 536–cysteine 545, cysteine 552–cysteine 563, cysteine 557–cysteine 572, cysteine 574–cysteine 583, cysteine 590–cysteine 601, cysteine 595–cysteine 610, cysteine 612–cysteine 621, cysteine 626–cysteine 637, cysteine 631–cysteine 646, cysteine 648–cysteine 655, cysteine 662–cysteine 669, cysteine 664–cysteine 674, cysteine 676–cysteine 685, cysteine 692–cysteine 703, cysteine 697–cysteine 712, cysteine 714–cysteine 723, cysteine 730–cysteine 741, cysteine 735–cysteine 750, cysteine 752–cysteine 761, cysteine 768–cysteine 779, cysteine 773–cysteine 788, cysteine 790–cysteine 799, cysteine 807–cysteine 818, cysteine 812–cysteine 827, cysteine 829–cysteine 838, cysteine 845–cysteine 856, cysteine 850–cysteine 865, cysteine 867–cysteine 876, cysteine 882–cysteine 903, cysteine 897–cysteine 912, cysteine 914–cysteine 923, cysteine 930–cysteine 941, cysteine 935–cysteine 950, cysteine 952–cysteine 961, cysteine 968–cysteine 979, cysteine 973–cysteine 988, cysteine 990–cysteine 999, cysteine 1006–cysteine 1019, cysteine 1011–cysteine 1028, cysteine 1030–cysteine 1039, cysteine 1046–cysteine 1057, cysteine 1051–cysteine 1069, cysteine 1071–cysteine 1080, cysteine 1087–cysteine 1098, cysteine 1092–cysteine 1110, cysteine 1112–cysteine 1121, cysteine 1130–cysteine 1142, cysteine 1136–cysteine 1155, cysteine 1157–cysteine 1166, cysteine 1174–cysteine 1187, cysteine 1183–cysteine 1199, cysteine 1210–cysteine 1234, cysteine 1216–cysteine 1229, cysteine 1225–cysteine 1241, cysteine 1247–cysteine 1273, cysteine 1255–cysteine 1268, and cysteine 1264–cysteine 1280. The region spanning 191–229 (DINECFLEPGPCPQGTSCHNTLGSYQCLCPVGQEGPQCK) is the EGF-like 5; calcium-binding domain. Positions 231–271 (RKGACPPGSCLNGGTCQLVPEGHSTFHLCLCPPGFTGLDCE) constitute an EGF-like 6 domain. One can recognise an EGF-like 7; calcium-binding domain in the interval 273–309 (NPDDCVRHQCQNGATCLDGLDTYTCLCPKTWKGWDCS). Positions 311–350 (DIDECEARGPPRCRNGGTCQNTAGSFHCVCVSGWGGAGCE) constitute an EGF-like 8; calcium-binding domain. Residues 352–388 (NLDDCAAATCAPGSTCIDRVGSFSCLCPPGRTGLLCH) form the EGF-like 9; calcium-binding domain. One can recognise an EGF-like 10 domain in the interval 389-427 (LEDMCLSQPCHVNAQCSTNPLTGSTLCICQPGYSGSTCH). The EGF-like 11; calcium-binding domain maps to 429 to 470 (DLDECQMAQQGPSPCEHGGSCINTPGSFNCLCLPGYTGSRCE). In terms of domain architecture, EGF-like 12; calcium-binding spans 472-508 (DHNECLSQPCHPGSTCLDLLATFHCLCPPGLEGRLCE). In terms of domain architecture, EGF-like 13; calcium-binding spans 510 to 546 (EVNECTSNPCLNQAACHDLLNGFQCLCLPGFTGARCE). In terms of domain architecture, EGF-like 14; calcium-binding spans 548–584 (DMDECSSTPCANGGRCRDQPGAFYCECLPGFEGPHCE). One can recognise an EGF-like 15; calcium-binding domain in the interval 586-622 (EVDECLSDPCPVGASCLDLPGAFFCLCRPGFTGQLCE). 14 EGF-like domains span residues 623–656 (VPLCTPNMCQPGQQCQGQEHRAPCLCPDGSPGCV), 658–686 (AEDNCPCHHGHCQRSLCVCDEGWTGPECE), 688–724 (ELGGCISTPCAHGGTCHPQPSGYNCTCPAGYMGLTCS), 726–762 (EVTACHSGPCLNGGSCSIRPEGYSCTCLPSHTGRHCQ), 764–800 (AVDHCVSASCLNGGTCVNKPGTFFCLCATGFQGLHCE), 803–839 (TNPSCADSPCRNKATCQDTPRGARCLCSPGYTGSSCQ), 841–877 (LIDLCARKPCPHTARCLQSGPSFQCLCLQGWTGALCD), 878–924 (FPLS…KLCQ), 926–962 (NVNPCEPNPCHHGSTCVPQPSGYVCQCAPGYEGQNCS), 964–1000 (VLDACQSQPCHNHGTCTSRPGGFHCACPPGFVGLRCE), 1002–1040 (DVDECLDRPCHPSGTAACHSLANAFYCQCLPGHTGQRCE), 1042–1081 (EMDLCQSQPCSNGGSCEITTGPPPGFTCHCPKGFEGPTCS), 1083–1122 (KALSCGIHHCHNGGLCLPSPKPGSPPLCACLSGFGGPDCL), and 1126–1167 (APPG…PRCQ). An N-linked (GlcNAc...) asparagine glycan is attached at asparagine 711. Asparagine 960 carries an N-linked (GlcNAc...) asparagine glycan. Residue asparagine 1139 is glycosylated (N-linked (GlcNAc...) asparagine). LNR repeat units follow at residues 1166-1209 (CQRP…PWKG), 1210-1241 (CPPHSQCWLLFRDGRCHPQCDSEECLFDGYDC), and 1247-1287 (CIPA…GEDS). Residues 1345-1369 (EELSGARDSSSWERQAPPTQPLGKE) form a disordered region. Residues 1444–1464 (PILCSPVVGVLLLALGALLVL) traverse the membrane as a helical segment. Residues 1465-1964 (QLIRRRRREH…PLNSVVRNLN (500 aa)) are Cytoplasmic-facing. Residues 1516–1535 (VDEDGVAMCSGPEEGEAEET) form a disordered region. ANK repeat units follow at residues 1628–1657 (TGETPLHLAARFSRPTAARRLLEAGANPNQ), 1661–1691 (AGRTPLHTAVAADAREVCQLLLASRQTTVDA), 1695–1724 (DGTTPLMLAARLAVEDLVEELIAARADVGA), 1728–1757 (RGKTALHWAAAVNNARAARSLLQAGADKDA), and 1761–1790 (REQTPLFLAAREGAVEVAQLLLELGAARGL). Positions 1879-1907 (RSGSCGGPTTRGRRFSAGSRGRRGARASQ) are disordered.

Belongs to the NOTCH family. In terms of assembly, heterodimer of a C-terminal fragment N(TM) and a N-terminal fragment N(EC) which are probably linked by disulfide bonds. Interacts with MAML1, MAML2 and MAML3 which act as transcriptional coactivators for NOTCH4. Post-translationally, synthesized in the endoplasmic reticulum as an inactive form which is proteolytically cleaved by a furin-like convertase in the trans-Golgi network before it reaches the plasma membrane to yield an active, ligand-accessible form. Cleavage results in a C-terminal fragment N(TM) and a N-terminal fragment N(EC). Following ligand binding, it is cleaved by TNF-alpha converting enzyme (TACE) to yield a membrane-associated intermediate fragment called notch extracellular truncation (NEXT). This fragment is then cleaved by presenilin dependent gamma-secretase to release a notch-derived peptide containing the intracellular domain (NICD) from the membrane. Phosphorylated. Highly expressed in lung, moderately in heart kidney, and at lower levels in the ovary and skeletal muscle. A very low expression is seen in the brain, intestine, liver and testis.

It is found in the cell membrane. It localises to the nucleus. Its function is as follows. Functions as a receptor for membrane-bound ligands Jagged1, Jagged2 and Delta1 to regulate cell-fate determination. Upon ligand activation through the released notch intracellular domain (NICD) it forms a transcriptional activator complex with RBPJ/RBPSUH and activates genes of the enhancer of split locus. Affects the implementation of differentiation, proliferation and apoptotic programs. May regulate branching morphogenesis in the developing vascular system. In Mus musculus (Mouse), this protein is Neurogenic locus notch homolog protein 4.